Reading from the N-terminus, the 312-residue chain is Olfactory receptor 51I2 (312 aa).

Topologically, residues M1–S25 are extracellular. A glycan (N-linked (GlcNAc...) asparagine) is linked at N5. A helical membrane pass occupies residues W26 to L46. The Cytoplasmic portion of the chain corresponds to Q47 to S54. A helical membrane pass occupies residues L55–M75. The Extracellular segment spans residues A76 to I99. C97 and C189 are joined by a disulfide. The helical transmembrane segment at Q100 to F120 threads the bilayer. Topologically, residues D121–E139 are cytoplasmic. Residues V140–P160 traverse the membrane as a helical segment. At F161–S196 the chain is on the extracellular side. A helical transmembrane segment spans residues I197–S217. Residues Y218–A237 are Cytoplasmic-facing. Residues L238 to V258 form a helical membrane-spanning segment. The Extracellular portion of the chain corresponds to S259–H273. The helical transmembrane segment at V274–A294 threads the bilayer. The Cytoplasmic portion of the chain corresponds to K295–I312.

It belongs to the G-protein coupled receptor 1 family.

The protein resides in the cell membrane. Odorant receptor. The protein is Olfactory receptor 51I2 (OR51I2) of Homo sapiens (Human).